Reading from the N-terminus, the 101-residue chain is MAKQSMKAREVKRAKLVVKFAEQRATLKTTINDVNATDEDRWSAMLKLQTLPRDSSPVRKRNRCSVTGRPHGFLRKFGMSRIKVREHMMRGEIPGLKKASW.

Belongs to the universal ribosomal protein uS14 family. In terms of assembly, part of the 30S ribosomal subunit. Contacts proteins S3 and S10.

In terms of biological role, binds 16S rRNA, required for the assembly of 30S particles and may also be responsible for determining the conformation of the 16S rRNA at the A site. The chain is Small ribosomal subunit protein uS14 from Psychromonas ingrahamii (strain DSM 17664 / CCUG 51855 / 37).